Here is a 251-residue protein sequence, read N- to C-terminus: tRNA pseudouridine synthase A (251 aa).

The active-site Nucleophile is the Asp52. Tyr113 contributes to the substrate binding site.

It belongs to the tRNA pseudouridine synthase TruA family. As to quaternary structure, homodimer.

The catalysed reaction is uridine(38/39/40) in tRNA = pseudouridine(38/39/40) in tRNA. Its function is as follows. Formation of pseudouridine at positions 38, 39 and 40 in the anticodon stem and loop of transfer RNAs. This chain is tRNA pseudouridine synthase A, found in Brucella abortus (strain 2308).